The following is a 408-amino-acid chain: Putative mannan endo-1,4-beta-mannosidase P (408 aa).

Positions 1–23 are cleaved as a signal peptide; that stretch reads MKCLCFIVLLAIVIAQSYVGVEA. A glycan (N-linked (GlcNAc...) asparagine) is linked at Asn-73. Substrate contacts are provided by Trp-85 and Asn-201. Residue Glu-202 is the Proton donor of the active site. Residue Glu-322 is the Nucleophile of the active site. A substrate-binding site is contributed by Trp-364.

The protein belongs to the glycosyl hydrolase 5 (cellulase A) family.

It is found in the secreted. The catalysed reaction is Random hydrolysis of (1-&gt;4)-beta-D-mannosidic linkages in mannans, galactomannans and glucomannans.. The chain is Putative mannan endo-1,4-beta-mannosidase P (MANP) from Arabidopsis thaliana (Mouse-ear cress).